Consider the following 529-residue polypeptide: Peptide chain release factor 3 (529 aa).

In terms of domain architecture, tr-type G spans 11–280 (AKRRTFAIIS…GLVEWAPAPM (270 aa)). Residues 20–27 (SHPDAGKT), 88–92 (DTPGH), and 142–145 (NKLD) contribute to the GTP site.

The protein belongs to the TRAFAC class translation factor GTPase superfamily. Classic translation factor GTPase family. PrfC subfamily.

Its subcellular location is the cytoplasm. Increases the formation of ribosomal termination complexes and stimulates activities of RF-1 and RF-2. It binds guanine nucleotides and has strong preference for UGA stop codons. It may interact directly with the ribosome. The stimulation of RF-1 and RF-2 is significantly reduced by GTP and GDP, but not by GMP. This Shigella boydii serotype 18 (strain CDC 3083-94 / BS512) protein is Peptide chain release factor 3.